Reading from the N-terminus, the 286-residue chain is Bifunctional protein FolD (286 aa).

NADP(+) is bound by residues 166–168 and Ile232; that span reads GAS.

The protein belongs to the tetrahydrofolate dehydrogenase/cyclohydrolase family. Homodimer.

It catalyses the reaction (6R)-5,10-methylene-5,6,7,8-tetrahydrofolate + NADP(+) = (6R)-5,10-methenyltetrahydrofolate + NADPH. It carries out the reaction (6R)-5,10-methenyltetrahydrofolate + H2O = (6R)-10-formyltetrahydrofolate + H(+). The protein operates within one-carbon metabolism; tetrahydrofolate interconversion. Its function is as follows. Catalyzes the oxidation of 5,10-methylenetetrahydrofolate to 5,10-methenyltetrahydrofolate and then the hydrolysis of 5,10-methenyltetrahydrofolate to 10-formyltetrahydrofolate. This Shewanella denitrificans (strain OS217 / ATCC BAA-1090 / DSM 15013) protein is Bifunctional protein FolD.